The sequence spans 4069 residues: Cardiomyopathy-associated protein 5 (4069 aa).

Disordered regions lie at residues 1–177 (MASR…SQVL), 341–387 (TVPS…DTPA), 442–525 (GLAA…EDSN), 538–558 (ESPL…VEHK), 597–705 (EYSV…VPSL), 732–793 (PSEE…RFTP), 844–872 (SSPD…APPL), 890–948 (LERY…FSPD), 979–1009 (TSPS…VSIP), 1041–1097 (ADEE…PEIP), 1160–1179 (VKEE…SVPA), 1205–1237 (RKEE…PESE), 1540–1575 (KETE…ELEN), 1594–1742 (PAVE…EEFQ), 1757–1809 (HPAD…ITEP), 1892–1988 (ENWM…VKLA), 2064–2175 (TISS…KKGI), 2187–2259 (FGSS…SGDG), 2385–2412 (PQQP…SIIL), 2425–2463 (SEDR…LENR), 2494–2527 (TQIT…NERP), 2653–2706 (QEGN…VGTQ), and 2750–2862 (SSRD…SDVP). Residues 27–47 (ETEEESEGEEDETAAESEEEP) are compositionally biased toward acidic residues. Residues 48–62 (DSRLSDQDEEGKIKQ) show a composition bias toward basic and acidic residues. A compositionally biased stretch (polar residues) spans 84–119 (TWETNSSRSSTPWASEESQTSGVCSREGSTVNSPPG). Residues 130-153 (KVRKRTHKSKHGSPSLRRKGNRKR) are compositionally biased toward basic residues. A Phosphoserine modification is found at serine 155. 2 stretches are compositionally biased toward polar residues: residues 156–177 (FESQ…SQVL) and 341–350 (TVPSYSSSGR). The segment covering 489–499 (LEPSISLSEPL) has biased composition (low complexity). The segment covering 500 to 510 (MLEEPEKEEIE) has biased composition (acidic residues). Position 631 is a phosphoserine (serine 631). Residues 640-659 (AYSPAAAPTSESSLSPSTTE) are compositionally biased toward low complexity. 3 stretches are compositionally biased toward polar residues: residues 664 to 673 (NQSPLFSTVT), 692 to 701 (PDSTSASEYS), and 752 to 775 (PSLS…TATS). Over residues 1049-1063 (TAATPVSEQFSSSQK) the composition is skewed to polar residues. The segment covering 1085–1094 (DKSEKAEIKP) has biased composition (basic and acidic residues). The span at 1214 to 1223 (QEATAHVSQD) shows a compositional bias: polar residues. The segment covering 1621-1630 (EPEKKDKPHQ) has biased composition (basic and acidic residues). Residues 1639-1662 (SEFSSDLGRQSGSIGTKQAKSPIT) are compositionally biased toward polar residues. Basic and acidic residues-rich tracts occupy residues 1668 to 1687 (VLEK…ENRE), 1704 to 1714 (LREESQNEEIK), and 1786 to 1795 (ILDKLSEETG). Residues 1796–1808 (HPNSSQVLQSITE) show a composition bias toward polar residues. A compositionally biased stretch (basic and acidic residues) spans 1935-1955 (SKDHTCEVRKQVLPHSAEESH). Over residues 1956-1980 (LSSQEAVSALDTSSGNTETLSSKSY) the composition is skewed to polar residues. Positions 2085–2124 (NEKEAHRSTPPFPEEKPLEESKMVQSKVIDDADEGKKPSP) are enriched in basic and acidic residues. The span at 2145 to 2155 (SPESPEVTQNP) shows a compositional bias: polar residues. 2 stretches are compositionally biased toward basic and acidic residues: residues 2162–2172 (AKPDLPEEKGK) and 2232–2250 (KPAD…DEPR). Positions 2387 to 2399 (QPKSASSNFASKN) are enriched in polar residues. The residue at position 2404 (serine 2404) is a Phosphoserine. Over residues 2441–2461 (ISEEETKLRSVSPTEKKDNLE) the composition is skewed to basic and acidic residues. Composition is skewed to basic and acidic residues over residues 2661-2681 (KSSR…ESEL), 2750-2769 (SSRD…ESEL), and 2777-2804 (ITKE…ETKS). Serine 2813 is subject to Phosphoserine. The span at 2830–2847 (AVKKKEMPRSELTPERHT) shows a compositional bias: basic and acidic residues. Residues 2964–2988 (SIDQEESEQMQDKLEYLEEKASFKT) are a coiled coil. Residues 3015 to 3031 (PLKENKQKETHKTKEEI) show a composition bias toward basic and acidic residues. 5 disordered regions span residues 3015–3037 (PLKE…DSET), 3119–3156 (EKGH…PGMP), 3204–3231 (KKKE…SDTD), 3386–3421 (SGAT…QDEY), and 3465–3495 (EFAS…SSEV). The required for RYR2 clustering stretch occupies residues 3052 to 3365 (YFEKYTLIDY…GSHGNEVGNA (314 aa)). Over residues 3128 to 3138 (PETQSQNSADR) the composition is skewed to polar residues. Residues 3139-3150 (NVSKDTKRDVDS) show a composition bias toward basic and acidic residues. Polar residues predominate over residues 3213-3227 (EGDSVNSEASFPSRN). Serine 3228 carries the post-translational modification Phosphoserine. Residues 3477-3489 (EQKELGSERKEED) show a composition bias toward basic and acidic residues. Positions 3517–3544 (KCPISATDKVFGTHKDHEVSTLDTAISA) are amphipathic helix H1. The stretch at 3544–3653 (AVKVQLAEFL…REAEELDEAV (110 aa)) forms a coiled coil. Residues 3545–3672 (VKVQLAEFLE…ERLLSAMEST (128 aa)) are B-box coiled-coil; BBC. An amphipathic helix H2 region spans residues 3631-3648 (SMDTAKDTLETIVREAEE). 2 Fibronectin type-III domains span residues 3704–3805 (VPQP…TAPS) and 3806–3898 (TPVI…TRGT). An amphipathic helix H3 region spans residues 3751–3767 (EVNELVEEYRLTVKESY). One can recognise a B30.2/SPRY domain in the interval 3880-4065 (NAFGTSEQSE…LHLGIEPPDS (186 aa)).

As to quaternary structure, interacts with PRKAR2A. Interacts with ACTN2 and DTNBP1/dysbindin. Interacts with DES. Interacts with DMD/dystrophin. Interacts with the calcineurin catalytic subunit PPP3CA. Interacts with TTN. Interacts with CAPN3; this interaction, which results in CMYA5 proteolysis, may protect CAPN3 from autolysis. Interacts with FSD2. Identified in a complex composed of FSD2, CMYA5 and RYR2. Post-translationally, phosphorylated by PKA. Expressed in skeletal muscle; at a strong level and in heart.

Its subcellular location is the nucleus. The protein resides in the sarcoplasmic reticulum. The protein localises to the cytoplasm. It localises to the perinuclear region. It is found in the myofibril. Its subcellular location is the sarcomere. The protein resides in the m line. In terms of biological role, may serve as an anchoring protein that mediates the subcellular compartmentation of protein kinase A (PKA) via binding to PRKAR2A. May function as a repressor of calcineurin-mediated transcriptional activity. May attenuate calcineurin ability to induce slow-fiber gene program in muscle and may negatively modulate skeletal muscle regeneration. Plays a role in the assembly of ryanodine receptor (RYR2) clusters in striated muscle. The chain is Cardiomyopathy-associated protein 5 (CMYA5) from Homo sapiens (Human).